A 380-amino-acid polypeptide reads, in one-letter code: Lipid-A-disaccharide synthase (380 aa).

The protein belongs to the LpxB family.

It carries out the reaction a lipid X + a UDP-2-N,3-O-bis[(3R)-3-hydroxyacyl]-alpha-D-glucosamine = a lipid A disaccharide + UDP + H(+). Its pathway is bacterial outer membrane biogenesis; LPS lipid A biosynthesis. In terms of biological role, condensation of UDP-2,3-diacylglucosamine and 2,3-diacylglucosamine-1-phosphate to form lipid A disaccharide, a precursor of lipid A, a phosphorylated glycolipid that anchors the lipopolysaccharide to the outer membrane of the cell. The polypeptide is Lipid-A-disaccharide synthase (Francisella tularensis subsp. tularensis (strain FSC 198)).